We begin with the raw amino-acid sequence, 147 residues long: Protein-export protein SecB (147 aa).

The protein belongs to the SecB family. In terms of assembly, homotetramer, a dimer of dimers. One homotetramer interacts with 1 SecA dimer.

The protein resides in the cytoplasm. One of the proteins required for the normal export of preproteins out of the cell cytoplasm. It is a molecular chaperone that binds to a subset of precursor proteins, maintaining them in a translocation-competent state. It also specifically binds to its receptor SecA. The polypeptide is Protein-export protein SecB (Neisseria meningitidis serogroup B (strain ATCC BAA-335 / MC58)).